The following is a 327-amino-acid chain: Tetraspanin-4 (327 aa).

Topologically, residues 1-6 (MRSRSN) are cytoplasmic. The helical transmembrane segment at 7–27 (LIGLINFFTFLLSIPILGGGI) threads the bilayer. At 28–43 (WLSSRANSTDCLRFLQ) the chain is on the extracellular side. N-linked (GlcNAc...) asparagine glycosylation occurs at N34. Residues 44-64 (WPLIIIGISIMVISLAGIAGA) traverse the membrane as a helical segment. Residues 65–75 (CYQNKFLMWLY) lie on the Cytoplasmic side of the membrane. The helical transmembrane segment at 76–96 (LFTMFFVIAALIGFTIFAYVV) threads the bilayer. Over 97–235 (TDKGSGRFVM…LGSLKKSWRK (139 aa)) the chain is Extracellular. N-linked (GlcNAc...) asparagine glycosylation is present at N187. The helical transmembrane segment at 236–256 (VSVINIVVVIILVIFYVIACA) threads the bilayer. Residues 257–287 (AYQNVKRMYNDEPVGEARMTNLILVIFKFKE) are Cytoplasmic-facing. A helical membrane pass occupies residues 288–308 (ILVQFFFGIVFLLLFNGLMVC). The Extracellular segment spans residues 309–327 (CCNDKFAFSVFFFGYVTYA).

Belongs to the tetraspanin (TM4SF) family.

Its subcellular location is the membrane. In terms of biological role, may be involved in the regulation of cell differentiation. The sequence is that of Tetraspanin-4 (TET4) from Arabidopsis thaliana (Mouse-ear cress).